The sequence spans 924 residues: LPS-assembly protein LptD (924 aa).

A signal peptide spans 1 to 33 (MAVKSLVFRRKFPLLVTGSLLALQPVAALTVQA). Positions 58-102 (NLPPRPAHTATSVSTAAAGSSVSGSGGETVEAEPTQRLVTESGGR) are disordered. Residues 66-90 (TATSVSTAAAGSSVSGSGGETVEAE) show a composition bias toward low complexity.

This sequence belongs to the LptD family. In terms of assembly, component of the lipopolysaccharide transport and assembly complex. Interacts with LptE and LptA.

The protein localises to the cell outer membrane. In terms of biological role, together with LptE, is involved in the assembly of lipopolysaccharide (LPS) at the surface of the outer membrane. In Pseudomonas aeruginosa (strain UCBPP-PA14), this protein is LPS-assembly protein LptD.